The sequence spans 291 residues: MSMPLHQISAIPSQDAISARVYRSKTKEKEREEQNEKTLGHFMSHSSNISKAGSPPSASAPAPVSSFSRTSITPSSQDICRICHCEGDDESPLITPCHCTGSLHFVHQACLQQWIKSSDTRCCELCKYEFIMETKLKPLRKWEKLQMTSSERRKIMCSVTFHVIAITCVVWSLYVLIDRTAEEIKQGQATGILEWPFWTKLVVVAIGFTGGLLFMYVQCKVYVQLWKRLKAYNRVIYVQNCPETSKKNIFEKSPLTEPNFENKHGYGICHSDTNSSCCTEPEDTGAEIIHV.

A disordered region spans residues 22–72; it reads YRSKTKEKEREEQNEKTLGHFMSHSSNISKAGSPPSASAPAPVSSFSRTSI. Basic and acidic residues predominate over residues 25 to 39; it reads KTKEKEREEQNEKTL. The span at 50 to 72 shows a compositional bias: low complexity; it reads SKAGSPPSASAPAPVSSFSRTSI. An RING-CH-type zinc finger spans residues 72–133; that stretch reads ITPSSQDICR…ELCKYEFIME (62 aa). Residues cysteine 80, cysteine 83, cysteine 97, cysteine 99, histidine 107, cysteine 110, cysteine 123, and cysteine 126 each coordinate Zn(2+). 2 consecutive transmembrane segments (helical) span residues 157 to 177 and 197 to 217; these read CSVT…YVLI and FWTK…FMYV. Serine 253 is subject to Phosphoserine.

In terms of assembly, interacts with CD86. As to expression, broadly expressed. Present in immature dendritic cells (at protein level).

Its subcellular location is the golgi apparatus membrane. The protein resides in the endoplasmic reticulum membrane. It is found in the cytoplasmic vesicle membrane. The protein localises to the lysosome membrane. It localises to the early endosome membrane. The enzyme catalyses S-ubiquitinyl-[E2 ubiquitin-conjugating enzyme]-L-cysteine + [acceptor protein]-L-lysine = [E2 ubiquitin-conjugating enzyme]-L-cysteine + N(6)-ubiquitinyl-[acceptor protein]-L-lysine.. It functions in the pathway protein modification; protein ubiquitination. Its function is as follows. E3 ubiquitin-protein ligase that plays several important roles in innate immunity and adaptive immunity. Mediates ubiquitination of CD86 and MHC class II proteins, such as HLA-DR alpha and beta, and promotes their subsequent endocytosis and sorting to lysosomes via multivesicular bodies. Possesses a very broad antiviral activity by specifically inactivating different viral fusion proteins. Targets and ubiquitinates cytoplasmic lysine residues of viral envelope glycoproteins with single transmembrane domains leading to their lysosomal degradation. Therefore, shows broad-spectrum inhibition against many viruses including retroviruses, rhabdoviruses, arenaviruses, sarbecoviruses or influenzaviruses. Strongly blocks human immunodeficiency virus type 1 envelope glycoprotein incorporation into virions by down-regulating its cell surface expression. Also blocks ebola virus glycoprotein/GP incorporation via surface down-regulation. Mediates 'Lys-63'-linked polyubiquitination of influenza M2 to target it to lysosome for degradation. Mediates the regulation of constitutive ubiquitination and trafficking of the viral restriction factor BST2 within the endocytic pathway. Plays a role in maintenance of immune tolerance to self by promoting the turnover and proteasomal degradation of PD-L1/CD274 via ubiquitination. Catalyzes the 'Lys-63'-linked polyubiquitylation of cGAS thereby inhibiting its DNA binding ability and impairing its antiviral innate immunity. Negatively regulates IL7-mediated T-cell homeostasis by mediating 'Lys-27'-linked polyubiquitination of IL7R, leading to its lysosomal degradation. In terms of biological role, (Microbial infection) Mediates 'Lys-63'-linked polyubiquitination of hepatitis C virus/HCV protein NS2 which allows its binding to HGS, an ESCRT-0 complex component, and this interaction is essential for HCV envelopment. This chain is E3 ubiquitin-protein ligase MARCHF8, found in Homo sapiens (Human).